We begin with the raw amino-acid sequence, 884 residues long: Alanine--tRNA ligase (884 aa).

Residues His-565, His-569, Cys-672, and His-676 each coordinate Zn(2+).

The protein belongs to the class-II aminoacyl-tRNA synthetase family. Zn(2+) serves as cofactor.

It is found in the cytoplasm. It carries out the reaction tRNA(Ala) + L-alanine + ATP = L-alanyl-tRNA(Ala) + AMP + diphosphate. Functionally, catalyzes the attachment of alanine to tRNA(Ala) in a two-step reaction: alanine is first activated by ATP to form Ala-AMP and then transferred to the acceptor end of tRNA(Ala). Also edits incorrectly charged Ser-tRNA(Ala) and Gly-tRNA(Ala) via its editing domain. This chain is Alanine--tRNA ligase, found in Sphingopyxis alaskensis (strain DSM 13593 / LMG 18877 / RB2256) (Sphingomonas alaskensis).